We begin with the raw amino-acid sequence, 139 residues long: MRTLWIMAVLLLGVEGHLMQFETLIMKIAGRSGVWWYGSYGCYCGAGGQGRPQDPSDRCCFVHDCCYGKVTGCNTKDEFYTYSEENGAITCGGENPCLKEVCECDLAAAICFRDNLDTYNSKKYWMFPAKNCLEESEPC.

Residues 1–16 form the signal peptide; sequence MRTLWIMAVLLLGVEG. Cystine bridges form between C42–C132, C44–C60, C59–C111, C65–C139, C66–C104, C73–C97, and C91–C102. Y43, G45, and G47 together coordinate Ca(2+). H63 is an active-site residue. D64 lines the Ca(2+) pocket. D105 is an active-site residue.

It depends on Ca(2+) as a cofactor. In terms of tissue distribution, expressed by the venom gland.

Its subcellular location is the secreted. It catalyses the reaction a 1,2-diacyl-sn-glycero-3-phosphocholine + H2O = a 1-acyl-sn-glycero-3-phosphocholine + a fatty acid + H(+). Functionally, snake venom phospholipase A2 (PLA2) that inhibits the ADP- and collagen-induced human platelet aggregation. Exhibits high hydrolytic activities and preferred the anionic micelles to the zwitterionic micelles. PLA2 catalyzes the calcium-dependent hydrolysis of the 2-acyl groups in 3-sn-phosphoglycerides. This Ovophis okinavensis (Ryukyu Island pit viper) protein is Acidic phospholipase A2 DE-I.